Reading from the N-terminus, the 333-residue chain is Adenosine deaminase (333 aa).

Residues histidine 12 and histidine 14 each coordinate Zn(2+). Positions 14, 16, and 170 each coordinate substrate. Histidine 197 lines the Zn(2+) pocket. Residue glutamate 200 is the Proton donor of the active site. Aspartate 278 contributes to the Zn(2+) binding site. Aspartate 279 contributes to the substrate binding site.

Belongs to the metallo-dependent hydrolases superfamily. Adenosine and AMP deaminases family. Adenosine deaminase subfamily. Zn(2+) serves as cofactor.

It carries out the reaction adenosine + H2O + H(+) = inosine + NH4(+). It catalyses the reaction 2'-deoxyadenosine + H2O + H(+) = 2'-deoxyinosine + NH4(+). Its function is as follows. Catalyzes the hydrolytic deamination of adenosine and 2-deoxyadenosine. This chain is Adenosine deaminase, found in Aliivibrio fischeri (strain MJ11) (Vibrio fischeri).